Reading from the N-terminus, the 259-residue chain is Protein snail homolog Sna (259 aa).

An SNAG domain region spans residues 1–20 (MPRSFLVKKHFSASKKPNYS). The disordered stretch occupies residues 71-113 (DYKKSPISPSSSDDSSKPLDLTSFSSEDEGGKTSDPPSPASSA). 5 C2H2-type zinc fingers span residues 119–141 (FQCN…KQLH), 150–172 (FSCK…IRSH), 176–198 (CVCK…IRTH), 204–226 (FSCT…LQTH), and 232–255 (YQCK…ETGC).

This sequence belongs to the snail C2H2-type zinc-finger protein family. Interacts (via SNAG domain) with limd1 (via LIM domains), wtip (via LIM domains) and ajuba (via LIM domains). Interacts with elp3; the interaction inhibits snai1 ubiquitination and promotes snai1 stability. In terms of processing, ubiquitinated. Maternal expression is nearly completely restricted to the vegetal hemisphere. Zygotic expression begins in the dorsal marginal zone just before gastrulation (stage 9), and is almost completely absent in the animal hemisphere. At mid-gastrula (stage 11-11.5), expression begins in the ectoderm in an arc surrounding the prospective neural plate. From stage 12, anterior expression is down-regulated, while levels are increased in the prospective neural crest.

It is found in the nucleus. Functionally, transcriptional repressor. Acts upstream of snai2/slug, zic5 and other neural crest markers in the specification of the neural crest and neural crest migration. Involved in embryonic mesoderm formation. In Xenopus laevis (African clawed frog), this protein is Protein snail homolog Sna (snai1).